Here is a 449-residue protein sequence, read N- to C-terminus: Glucose-6-phosphate isomerase (449 aa).

The active-site Proton donor is the E291. Residues H312 and K426 contribute to the active site.

It belongs to the GPI family.

The protein localises to the cytoplasm. It carries out the reaction alpha-D-glucose 6-phosphate = beta-D-fructose 6-phosphate. The protein operates within carbohydrate biosynthesis; gluconeogenesis. Its pathway is carbohydrate degradation; glycolysis; D-glyceraldehyde 3-phosphate and glycerone phosphate from D-glucose: step 2/4. Its function is as follows. Catalyzes the reversible isomerization of glucose-6-phosphate to fructose-6-phosphate. This is Glucose-6-phosphate isomerase from Streptococcus pyogenes serotype M3 (strain ATCC BAA-595 / MGAS315).